The sequence spans 547 residues: Chaperonin GroEL (547 aa).

ATP is bound by residues 30–33 (TLGP), Lys51, 87–91 (DGTTT), Gly415, 479–481 (NAA), and Asp495.

The protein belongs to the chaperonin (HSP60) family. In terms of assembly, forms a cylinder of 14 subunits composed of two heptameric rings stacked back-to-back. Interacts with the co-chaperonin GroES.

It is found in the cytoplasm. It catalyses the reaction ATP + H2O + a folded polypeptide = ADP + phosphate + an unfolded polypeptide.. Its function is as follows. Together with its co-chaperonin GroES, plays an essential role in assisting protein folding. The GroEL-GroES system forms a nano-cage that allows encapsulation of the non-native substrate proteins and provides a physical environment optimized to promote and accelerate protein folding. This chain is Chaperonin GroEL, found in Pseudomonas syringae pv. syringae (strain B728a).